Here is a 238-residue protein sequence, read N- to C-terminus: MRKLFLSLLMIPFVAKANFMIYPISKEIKGGSSELIRIYSKSKDTQYIKVYTKKVLNPGTKEEYEVDTPNWEGGLVTTPSKVILPGGGSKSVRLSQLKDISSEDVYRVYFESIKPEKQDGLSKNKSLKTDLSVNIIYAALIRVLPKDGKSDMRASLSPKSSLLIKNTGNVRVGIKDAFFCKKTSINNDDCIKKTYNKNIYPGSSFDTGVIQNGFSHIFIDSVDGSAGKQGKRMLISIH.

A signal peptide spans 1 to 17 (MRKLFLSLLMIPFVAKA).

It localises to the fimbrium. In terms of biological role, might function as a shuttle protein in the transport of fimbria through the periplasmic space or might function as an adhesin. This is CS1 fimbrial subunit B (csoB) from Escherichia coli.